Here is a 548-residue protein sequence, read N- to C-terminus: Luciferin 4-monooxygenase (548 aa).

A Microbody targeting signal motif is present at residues Ala546–Met548.

Belongs to the ATP-dependent AMP-binding enzyme family. As to quaternary structure, homodimer. Mg(2+) serves as cofactor.

Its subcellular location is the peroxisome. The catalysed reaction is firefly D-luciferin + ATP + O2 = firefly oxyluciferin + hnu + AMP + CO2 + diphosphate. Inhibited by ATP analogs and sodium deoxycholate. Activated by choline-containing phospholipids. Functionally, produces green light with a wavelength of 570 nm. The chain is Luciferin 4-monooxygenase from Luciola mingrelica (Southern Russian firefly).